A 110-amino-acid chain; its full sequence is Large ribosomal subunit protein mL60 (110 aa).

This sequence belongs to the mitochondrion-specific ribosomal protein mL60 family. In terms of assembly, component of the mitochondrial large ribosomal subunit (mt-LSU). Mature N.crassa 74S mitochondrial ribosomes consist of a small (37S) and a large (54S) subunit. The 37S small subunit contains a 16S ribosomal RNA (16S mt-rRNA) and 32 different proteins. The 54S large subunit contains a 23S rRNA (23S mt-rRNA) and 42 different proteins.

The protein resides in the mitochondrion. Its function is as follows. Component of the mitochondrial ribosome (mitoribosome), a dedicated translation machinery responsible for the synthesis of mitochondrial genome-encoded proteins, including at least some of the essential transmembrane subunits of the mitochondrial respiratory chain. The mitoribosomes are attached to the mitochondrial inner membrane and translation products are cotranslationally integrated into the membrane. The chain is Large ribosomal subunit protein mL60 (mrpl31) from Neurospora crassa (strain ATCC 24698 / 74-OR23-1A / CBS 708.71 / DSM 1257 / FGSC 987).